The chain runs to 209 residues: MARYTGPQCKLCRREGMKLYLKGERCFTDKCAFDRRPFAPGDHGRDKKKLTQYGIQLRAKQTMKRIYGVLETQFRRYYETASRKSGDTRENLVVQVERRLDNVVYRLGFAVNRTTARQLVNHGHVLVNGRKVTIPSYQVRPGDVIEIREKSRDILPVKNAIELNKDKNTMPWLTVDYENYKGTYERNPKLEEVIDLPVDVQAIIELYSR.

An S4 RNA-binding domain is found at 98–164; that stretch reads RRLDNVVYRL…LPVKNAIELN (67 aa).

Belongs to the universal ribosomal protein uS4 family. In terms of assembly, part of the 30S ribosomal subunit. Contacts protein S5. The interaction surface between S4 and S5 is involved in control of translational fidelity.

In terms of biological role, one of the primary rRNA binding proteins, it binds directly to 16S rRNA where it nucleates assembly of the body of the 30S subunit. Its function is as follows. With S5 and S12 plays an important role in translational accuracy. The protein is Small ribosomal subunit protein uS4 of Thermosipho africanus (strain TCF52B).